The chain runs to 364 residues: sn-glycerol-3-phosphate import ATP-binding protein UgpC (364 aa).

One can recognise an ABC transporter domain in the interval 4–235 (VVLRNVRKTY…PATTFVASFI (232 aa)). 37 to 44 (GPSGCGKS) is an ATP binding site.

Belongs to the ABC transporter superfamily. sn-glycerol-3-phosphate importer (TC 3.A.1.1.3) family. In terms of assembly, the complex is composed of two ATP-binding proteins (UgpC), two transmembrane proteins (UgpA and UgpE) and a solute-binding protein (UgpB).

Its subcellular location is the cell inner membrane. The catalysed reaction is sn-glycerol 3-phosphate(out) + ATP + H2O = sn-glycerol 3-phosphate(in) + ADP + phosphate + H(+). Functionally, part of the ABC transporter complex UgpBAEC involved in sn-glycerol-3-phosphate (G3P) import. Responsible for energy coupling to the transport system. The sequence is that of sn-glycerol-3-phosphate import ATP-binding protein UgpC from Rhodopseudomonas palustris (strain BisB5).